The sequence spans 122 residues: MCCYVGKATKIFLCLAAALIVVGLVLGFGLAHRTWGERKVQPDCRWPDCQLQPAYGGGGGGGDPLPATSGAGDTPPGVPLTEPAVAAFPGVASASSAAPPTASMPYLGPPSPFAVGLAPAHG.

Residues 1–35 (MCCYVGKATKIFLCLAAALIVVGLVLGFGLAHRTW) form the signal peptide. Residues 55–83 (YGGGGGGGDPLPATSGAGDTPPGVPLTEP) are disordered.

This is an uncharacterized protein from Oryza sativa subsp. japonica (Rice).